A 388-amino-acid polypeptide reads, in one-letter code: Aldolase vrtJ (388 aa).

Lys-241 carries the N6-(pyridoxal phosphate)lysine modification.

It belongs to the threonine aldolase family. It depends on pyridoxal 5'-phosphate as a cofactor.

The protein operates within secondary metabolite biosynthesis; terpenoid biosynthesis. Functionally, aldolase; part of the gene cluster that mediates the biosynthesis of viridicatumtoxin, a tetracycline-like fungal meroterpenoid with a unique, fused spirobicyclic ring system. The first step of the pathway is the production of the malonamoyl-CoA starter unit for the polyketide synthase vrtA. The aldolase vrtJ may be involved in the synthesis of the malonamate substrate for malonamoyl-CoA synthetase vrtB. The polyketide synthase vrtA then may utilize the malonamoyl-CoA starter unit, followed by sequential condensation of eight malonyl-CoA units to form the polyketide backbone. The cyclization of the last ring could be mediated by the lactamase-like protein vrtG. The proposed post-PKS tailoring steps are a hydroxylation at C5 catalyzed the cytochrome P450 monooxygenase vrtE, a hydroxylation at C12a catalyzed by VrtH and/or VrtI, and an O-methylation by the O-methyltransferase vrtF. VrtC is then proposed to catalyze the transfer of a geranyl group synthesized by vrtD to the aromatic C ring of the tetracyclic polyketide intermediate of viridicatumtoxin to yield previridicatumtoxin. Finally, the cytochrome P450 monooxygenase vrtK catalyzes the spirocyclization of the geranyl moiety of previridicatumtoxin to afford viridicatumtoxin. The sequence is that of Aldolase vrtJ from Penicillium aethiopicum.